Consider the following 384-residue polypeptide: Succinyl-diaminopimelate desuccinylase (384 aa).

Position 71 (histidine 71) interacts with Zn(2+). Aspartate 73 is an active-site residue. Aspartate 104 is a binding site for Zn(2+). Glutamate 139 acts as the Proton acceptor in catalysis. Zn(2+) is bound by residues glutamate 140, glutamate 168, and histidine 357.

Belongs to the peptidase M20A family. DapE subfamily. In terms of assembly, homodimer. Requires Zn(2+) as cofactor. It depends on Co(2+) as a cofactor.

The enzyme catalyses N-succinyl-(2S,6S)-2,6-diaminopimelate + H2O = (2S,6S)-2,6-diaminopimelate + succinate. It functions in the pathway amino-acid biosynthesis; L-lysine biosynthesis via DAP pathway; LL-2,6-diaminopimelate from (S)-tetrahydrodipicolinate (succinylase route): step 3/3. In terms of biological role, catalyzes the hydrolysis of N-succinyl-L,L-diaminopimelic acid (SDAP), forming succinate and LL-2,6-diaminopimelate (DAP), an intermediate involved in the bacterial biosynthesis of lysine and meso-diaminopimelic acid, an essential component of bacterial cell walls. The chain is Succinyl-diaminopimelate desuccinylase from Bradyrhizobium sp. (strain BTAi1 / ATCC BAA-1182).